We begin with the raw amino-acid sequence, 215 residues long: Probable septum site-determining protein MinC (215 aa).

This sequence belongs to the MinC family. In terms of assembly, interacts with MinD and FtsZ.

Cell division inhibitor that blocks the formation of polar Z ring septums. Rapidly oscillates between the poles of the cell to destabilize FtsZ filaments that have formed before they mature into polar Z rings. Prevents FtsZ polymerization. The sequence is that of Probable septum site-determining protein MinC from Clostridium botulinum (strain Alaska E43 / Type E3).